A 253-amino-acid chain; its full sequence is MARRKLVYEGKAKTLYEGPEPGTLVQYFKDDATAGNGEKRDVIDGKGVLNNRLSEFFMKGLGNIGVPTHFIKRLNMREQLIRAVEIIPLEVVVRNTAAGSICSRLGIEEGTPMPRPIVEFYFKNDDLNDPIVSEEHIIAFGWAAQQDLDDMVSLALRVNDFLSGLMLGVGIKLVDFKIEIGRIWDGDFMRLIVADEISPDSCRLWDIETGRKLDKDVFRRDLGDLADAYTEVAKRLGIMPQGPVGAIKPTLIN.

It belongs to the SAICAR synthetase family.

It catalyses the reaction 5-amino-1-(5-phospho-D-ribosyl)imidazole-4-carboxylate + L-aspartate + ATP = (2S)-2-[5-amino-1-(5-phospho-beta-D-ribosyl)imidazole-4-carboxamido]succinate + ADP + phosphate + 2 H(+). It functions in the pathway purine metabolism; IMP biosynthesis via de novo pathway; 5-amino-1-(5-phospho-D-ribosyl)imidazole-4-carboxamide from 5-amino-1-(5-phospho-D-ribosyl)imidazole-4-carboxylate: step 1/2. The polypeptide is Phosphoribosylaminoimidazole-succinocarboxamide synthase (Jannaschia sp. (strain CCS1)).